Here is a 128-residue protein sequence, read N- to C-terminus: Ribosome-binding factor A (128 aa).

Belongs to the RbfA family. Monomer. Binds 30S ribosomal subunits, but not 50S ribosomal subunits or 70S ribosomes.

The protein localises to the cytoplasm. Functionally, one of several proteins that assist in the late maturation steps of the functional core of the 30S ribosomal subunit. Associates with free 30S ribosomal subunits (but not with 30S subunits that are part of 70S ribosomes or polysomes). Required for efficient processing of 16S rRNA. May interact with the 5'-terminal helix region of 16S rRNA. The polypeptide is Ribosome-binding factor A (Rickettsia prowazekii (strain Madrid E)).